A 253-amino-acid polypeptide reads, in one-letter code: Homeotic protein ultrabithorax (253 aa).

Residues 125–141 (GNTSNGSNAPNAANGQN) show a composition bias toward low complexity. Positions 125-193 (GNTSNGSNAP…GNGTAGGVPQ (69 aa)) are disordered. The segment covering 176–189 (RGGGSAGGGNGTAG) has biased composition (gly residues). The Antp-type hexapeptide signature appears at 237–242 (FYPWMA).

This sequence belongs to the Antp homeobox family.

The protein resides in the nucleus. Its function is as follows. Sequence-specific transcription factor which is part of a developmental regulatory system that provides cells with specific positional identities on the anterior-posterior axis. Binds the consensus region 5'-TTAAT[GT][GA]-3'. This homeotic protein controls development of the cells in the posterior thoracic and first abdominal segments. It activates the synthesis of the decapentaplegic (DPP) growth factor. The sequence is that of Homeotic protein ultrabithorax (Ubx) from Drosophila funebris (Fruit fly).